Here is a 539-residue protein sequence, read N- to C-terminus: Glycine betaine transporter 2 (539 aa).

The next 12 helical transmembrane spans lie at 44-64 (LTNP…LLAL), 85-105 (FGAY…ALAF), 129-149 (IVLC…EPIA), 175-195 (FMHW…IVLM), 231-251 (CSII…GLQI), 265-285 (FITQ…SALS), 299-319 (IILS…SFII), 348-368 (WWTV…AIFI), 380-400 (LILS…SIVG), 426-446 (VLLA…LFLI), 480-500 (FWGL…SGGI), and 503-523 (LQSF…PSIL).

The protein belongs to the BCCT transporter (TC 2.A.15) family.

Its subcellular location is the cell inner membrane. Functionally, involved in the uptake of the osmoprotectant glycine betaine. The sequence is that of Glycine betaine transporter 2 from Vibrio parahaemolyticus serotype O3:K6 (strain RIMD 2210633).